Consider the following 426-residue polypeptide: Citrate transporter (426 aa).

The next 12 membrane-spanning stretches (helical) occupy residues 1-21, 22-42, 59-79, 86-106, 137-157, 176-196, 232-252, 278-298, 318-338, 343-363, 377-397, and 406-426; these read MLAILGFVMMIVFMYLIMSNR, LSALIALIVVPIVFALISGFG, TGIMLLFAILYFGIMIDSGLF, ILSFVKGDPLKIAVGTAVLTM, LVLAGIAMLGSGVMNIIPWGG, PLIPAMIAGILWVIAVAYILG, LLTVALMAALITSLLPLPVLF, AGNALNVVSMVFAAGIFTGIL, AMGPHLPLITAIVSMPFTFFM, FYFGVLPIIAEAASAYGIDAA, LLSPLVPSTYLLVGMAGVSFG, and WAVGTTIVMTIAALLIGIISF.

Belongs to the CitM (TC 2.A.11) transporter family.

Its subcellular location is the cell membrane. In terms of biological role, transports the free citrate anion. Probably cotransports citrate and at least three or four protons. The citrate uptake is inhibited by the presence of magnesium ions. In Bacillus subtilis (strain 168), this protein is Citrate transporter (citN).